The following is a 499-amino-acid chain: Alpha-L-arabinofuranosidase B (499 aa).

The signal sequence occupies residues 1–17; that stretch reads MFSRRNLLALGLAATVS. Positions 18 to 335 are catalytic; the sequence is AGPCDIYEAG…ENIVAAKYVV (318 aa). 3 disulfide bridges follow: C21-C31, C81-C86, and C176-C177. N83 carries N-linked (GlcNAc...) asparagine glycosylation. N-linked (GlcNAc...) asparagine glycosylation occurs at N202. D219 contacts substrate. The active-site Nucleophile is E221. Substrate is bound by residues N222, N223, and G296. D297 acts as the Proton donor in catalysis. The segment at 336–499 is ABD; it reads GSLVSGPSFT…SFEIETAFAS (164 aa). A disulfide bridge connects residues C401 and C439. H416, N418, F419, D435, H463, E465, L468, and D488 together coordinate substrate.

Belongs to the glycosyl hydrolase 54 family.

It localises to the secreted. It carries out the reaction Hydrolysis of terminal non-reducing alpha-L-arabinofuranoside residues in alpha-L-arabinosides.. Its pathway is glycan metabolism; L-arabinan degradation. Alpha-L-arabinofuranosidase involved in the degradation of arabinoxylan, a major component of plant hemicellulose. Able to hydrolyze 1,5-, 1,3- and 1,2-alpha-linkages not only in L-arabinofuranosyl oligosaccharides, but also in polysaccharides containing terminal non-reducing L-arabinofuranoses in side chains, like L-arabinan, arabinogalactan and arabinoxylan. This chain is Alpha-L-arabinofuranosidase B (abfB), found in Aspergillus kawachii (strain NBRC 4308) (White koji mold).